The chain runs to 363 residues: NAD kinase 1 (363 aa).

Residue aspartate 68 is the Proton acceptor of the active site. NAD(+)-binding positions include aspartate 68–glycine 69, arginine 73, asparagine 175–aspartate 176, arginine 186, aspartate 205, alanine 240, and glutamine 275.

Belongs to the NAD kinase family. A divalent metal cation is required as a cofactor.

The protein resides in the cytoplasm. The enzyme catalyses NAD(+) + ATP = ADP + NADP(+) + H(+). In terms of biological role, involved in the regulation of the intracellular balance of NAD and NADP, and is a key enzyme in the biosynthesis of NADP. Catalyzes specifically the phosphorylation on 2'-hydroxyl of the adenosine moiety of NAD to yield NADP. The protein is NAD kinase 1 of Streptomyces coelicolor (strain ATCC BAA-471 / A3(2) / M145).